The primary structure comprises 66 residues: Conotoxin Cal5.2 (66 aa).

A signal peptide spans methionine 1–threonine 20. Residues phenylalanine 21 to glutamine 51 constitute a propeptide that is removed on maturation. Valine 65 carries the valine amide modification.

This sequence belongs to the conotoxin T superfamily. In terms of processing, contains 2 disulfide bonds that can be either 'C1-C3, C2-C4' or 'C1-C4, C2-C3', since these disulfide connectivities have been observed for conotoxins with cysteine framework V (for examples, see AC P0DQQ7 and AC P81755). In terms of tissue distribution, expressed by the venom duct.

Its subcellular location is the secreted. Its function is as follows. Probable neurotoxin with unknown target. Possibly targets ion channels. This chain is Conotoxin Cal5.2, found in Californiconus californicus (California cone).